An 88-amino-acid chain; its full sequence is Phosphocarrier protein HPr (88 aa).

The 88-residue stretch at 1-88 (MAQKTFTVTA…DTMSKEGLGE (88 aa)) folds into the HPr domain. Phosphoserine is present on S12. Catalysis depends on H15, which acts as the Pros-phosphohistidine intermediate. Phosphoserine; by HPrK/P is present on S46.

The protein belongs to the HPr family.

It localises to the cytoplasm. With respect to regulation, phosphorylation on Ser-46 inhibits the phosphoryl transfer from enzyme I to HPr. Its function is as follows. General (non sugar-specific) component of the phosphoenolpyruvate-dependent sugar phosphotransferase system (sugar PTS). This major carbohydrate active-transport system catalyzes the phosphorylation of incoming sugar substrates concomitantly with their translocation across the cell membrane. The phosphoryl group from phosphoenolpyruvate (PEP) is transferred to the phosphoryl carrier protein HPr by enzyme I. Phospho-HPr then transfers it to the PTS EIIA domain. P-Ser-HPr interacts with the catabolite control protein A (CcpA), forming a complex that binds to DNA at the catabolite response elements cre, operator sites preceding a large number of catabolite-regulated genes. Thus, P-Ser-HPr is a corepressor in carbon catabolite repression (CCR), a mechanism that allows bacteria to coordinate and optimize the utilization of available carbon sources. P-Ser-HPr also plays a role in inducer exclusion, in which it probably interacts with several non-PTS permeases and inhibits their transport activity. This is Phosphocarrier protein HPr (ptsH) from Priestia megaterium (Bacillus megaterium).